We begin with the raw amino-acid sequence, 453 residues long: Tryptophan biosynthesis protein TrpCF (453 aa).

The interval 1-257 (MMQTVLAKIV…AAVRRVLLGE (257 aa)) is indole-3-glycerol phosphate synthase. The tract at residues 258 to 453 (NKVCGLTRGQ…ASVFQTLRAY (196 aa)) is N-(5'-phosphoribosyl)anthranilate isomerase.

It in the N-terminal section; belongs to the TrpC family. In the C-terminal section; belongs to the TrpF family. In terms of assembly, monomer.

It catalyses the reaction N-(5-phospho-beta-D-ribosyl)anthranilate = 1-(2-carboxyphenylamino)-1-deoxy-D-ribulose 5-phosphate. It carries out the reaction 1-(2-carboxyphenylamino)-1-deoxy-D-ribulose 5-phosphate + H(+) = (1S,2R)-1-C-(indol-3-yl)glycerol 3-phosphate + CO2 + H2O. It functions in the pathway amino-acid biosynthesis; L-tryptophan biosynthesis; L-tryptophan from chorismate: step 3/5. The protein operates within amino-acid biosynthesis; L-tryptophan biosynthesis; L-tryptophan from chorismate: step 4/5. Bifunctional enzyme that catalyzes two sequential steps of tryptophan biosynthetic pathway. The first reaction is catalyzed by the isomerase, coded by the TrpF domain; the second reaction is catalyzed by the synthase, coded by the TrpC domain. The protein is Tryptophan biosynthesis protein TrpCF (trpC) of Escherichia coli (strain K12).